The following is a 137-amino-acid chain: Prostate and testis expressed protein 13 (137 aa).

Positions 1-20 are cleaved as a signal peptide; that stretch reads MFQKLLLSVFIILLMDVGER. The region spanning 28 to 114 is the UPAR/Ly6 domain; it reads RHCNLCSHYD…CIDRNYCNDG (87 aa). Disulfide bonds link C30-C60, C33-C41, C48-C84, C87-C104, and C105-C111. N57 is a glycosylation site (N-linked (GlcNAc...) asparagine).

This sequence belongs to the PATE family. Strongly expressed in the epididymis, including the initial segment, caput, corpus and cauda regions. Weakly expressed in prostate.

It localises to the secreted. This is Prostate and testis expressed protein 13 from Mus musculus (Mouse).